A 1551-amino-acid polypeptide reads, in one-letter code: MEQRLRALEQLVRGEAGGSPGLDGLLDLLLGVHQELSSAPLRRERNVAQFLSWASPFVTKVKELRLQRDDFEILKVIGRGAFGEVAVVRQRGSGQIFAMKMLHKWEMLKRAETACFREERDVLVKGDSRWVTALHYAFQDEEYLYLVMDYYAGGDLLTLLSRFEDRLPPELAQFYLAEMVLAIHSLHQLGYVHRDVKPDNILLDMNGHIRLADFGSCLRLNNNGMVDSSVAVGTPDYISPEILQAMEEGKGHYGPQCDWWSLGVCAYELLFGETPFYAESLVETYGKIMNHEDHLQFPADVTDVPASAQDLIRQLLCRQEERLGRGGLDDFRKHPFFEGVDWERLATSTAPYIPELRGPMDTSNFDVDDDTLNRPETLPPSSHGAFSGHHLPFVGFTYTSGSPFDVQSSELMAAPEGTPHCVEQVKVELSHKCQEPLHGPLQPQELVRLQKEVQVLQEKLAETLRDSKASLSQTDGLHARSPAPNIQLQQEKDRLQQELTEAQAALRVQDAELCQAQNRQEEFLQRLWEAQEREAAAASQIQALNSQLEEAWVVRRELEGQVTTLSQEVTRLQGQCKQESSQAKTVHAAPETNGIGSPEGQSQEAQLRKEVAALREQLEHACSQGISVGKEEVLCRLQEENQRLSREQERLAGELELELQSKQRLEGERRETESNWEAQIADILSWVNDEKVSRGYLQALATKMAEELESLRNVGTQTLPTRPLDHQWKARRLQKMEASARLELQSALEAEIRAKQSLQEQLTQVQEAQRQAERRLQEAEKQSQALQQEVAELREELQARGPGDARPSTSLIPLLSFWNTEKDSAKDPGNSGEGPRSGAEAELRPEGRRSLRMGSVFPRVPAATTTPAEGPPAKPGSHTLRPRSFPSPTKCLRCTSLMLGLGRQGLGCDTCGYFCHSACASQAPPCPVPPELLRTALGVHPETGTGTAYEGFLSVPRPSGVRRGWQRVYAALSDSRLLLFDAPDPRGSLASGVLLQALDLRDPQFSATPVLAPDVIHAQSKDLPRIFRVTASQLTVPPTTCTVLLLAENEGERERWLQVLGELQRLLLDARPRPRPVYTLKEAYDNGLPLLPHALCAAVIDQERLALGTEEGLFVIHLHSNDIFQVGDCRRVQRLAVSSAAGLLAVLCGRGPSVRLFALDELESAEVAGAKIPESRGCQALVAGRILQARTPVLCVAVKRQVLCYQLGPGPGPWQRRIRELQAPAPVQSLGLLGDRLCVGAAGTFALYPLLNEAAPLALGTGLVAEELPASRGGLGEALGAVELSLSELLLLFATAGVYVDSAGRKSRSHELLWPAAPTGWGYTAPYLTVFSENALDVFDVRRAEWVQTVPLKKVRPLNPEGSLFLYGTEKVRLTYLRNPLAEKDEFDIPDLTDNSRRQLFRTKSKRRFFFRVSDELRQQQRREMLKDPFVRSKFISPPTNFNHLVHVGPTEGRPNTRDGTRAQEQKSRGARSSGPQRPHSFSEAFRRPVSTGSDGLPGETDPLVKRKPWTSLSSESVSCPQGSLSPAASLIQVSERPRSLPPDPESESSP.

The region spanning 71-337 is the Protein kinase domain; that stretch reads FEILKVIGRG…LDDFRKHPFF (267 aa). ATP-binding positions include 77–85 and Lys-100; that span reads IGRGAFGEV. The active-site Proton acceptor is the Asp-195. 2 positions are modified to phosphoserine; by autocatalysis: Ser-216 and Ser-228. Position 234 is a phosphothreonine; by autocatalysis (Thr-234). The AGC-kinase C-terminal domain maps to 338-408; sequence EGVDWERLAT…TSGSPFDVQS (71 aa). 2 coiled-coil regions span residues 442-675 and 729-801; these read QPQE…TESN and KARR…QARG. A disordered region spans residues 578–605; that stretch reads QESSQAKTVHAAPETNGIGSPEGQSQEA. Positions 820–886 are disordered; that stretch reads TEKDSAKDPG…SHTLRPRSFP (67 aa). Residues 839-849 show a composition bias toward basic and acidic residues; the sequence is AEAELRPEGRR. The Phorbol-ester/DAG-type zinc-finger motif lies at 877–926; that stretch reads SHTLRPRSFPSPTKCLRCTSLMLGLGRQGLGCDTCGYFCHSACASQAPPC. The region spanning 946–1065 is the PH domain; it reads GTAYEGFLSV…WLQVLGELQR (120 aa). The 275-residue stretch at 1091–1365 folds into the CNH domain; it reads LPHALCAAVI…RPLNPEGSLF (275 aa). The region spanning 1436–1449 is the CRIB domain; the sequence is ISPPTNFNHLVHVG. The tract at residues 1441-1551 is disordered; it reads NFNHLVHVGP…PPDPESESSP (111 aa). Positions 1455 to 1468 are enriched in basic and acidic residues; sequence PNTRDGTRAQEQKS. Ser-1481 is modified (phosphoserine). Over residues 1511-1527 the composition is skewed to polar residues; that stretch reads TSLSSESVSCPQGSLSP.

The protein belongs to the protein kinase superfamily. AGC Ser/Thr protein kinase family. DMPK subfamily. In terms of assembly, homodimer and homotetramer via the coiled coil regions. Interacts tightly with GTP-bound but not GDP-bound CDC42. Mg(2+) serves as cofactor.

It is found in the cytoplasm. The enzyme catalyses L-seryl-[protein] + ATP = O-phospho-L-seryl-[protein] + ADP + H(+). It catalyses the reaction L-threonyl-[protein] + ATP = O-phospho-L-threonyl-[protein] + ADP + H(+). Its activity is regulated as follows. Maintained in an inactive, closed conformation by an interaction between the kinase domain and the negative autoregulatory C-terminal coiled-coil region. Agonist binding to the phorbol ester binding site disrupts this, releasing the kinase domain to allow N-terminus-mediated dimerization and kinase activation by transautophosphorylation. In terms of biological role, may act as a downstream effector of CDC42 in cytoskeletal reorganization. Contributes to the actomyosin contractility required for cell invasion, through the regulation of MYPT1 and thus MLC2 phosphorylation. This Mus musculus (Mouse) protein is Serine/threonine-protein kinase MRCK gamma.